The primary structure comprises 458 residues: Histidine--tRNA ligase (458 aa).

This sequence belongs to the class-II aminoacyl-tRNA synthetase family. Homodimer.

It is found in the cytoplasm. It carries out the reaction tRNA(His) + L-histidine + ATP = L-histidyl-tRNA(His) + AMP + diphosphate + H(+). This is Histidine--tRNA ligase from Azobacteroides pseudotrichonymphae genomovar. CFP2.